A 554-amino-acid chain; its full sequence is MLQISLWKRLVILGLCLAALITAAPNMFYARVEGHNDAVSAFEKTGAMTETQEAAKAAWPDWAPSALVNLGLDLRGGAHLLAEVHLGEVYKARMDALWPEVRKVLAAERATIGAIRRVPSPEGELRIQIGERAQIARAVEVARTLASPVVSLTGVGQTDYEVTGEGDTVVFRLSEAEKKATDDRTMQQSLEIVRRRVDAAGTREPTIMREGTDRILIEVPGIGSAQELKDLIGTTAKLTFHPVLSTTSNPNAPVASGNELLPDAERQGLYHLLDEVPVVTGDDLTDARPTTDDNGAPAVSFRFNVSGARAFGDYTAGHIGEPFAIVLDGKVISAPTIQAHIAGGSGIITGRFSIEEATDLALLLRAGALPAGMTFLEERTIGPELGADSVKAGMVASVIGFVAVVAYMIASYGLFGFFSSVALFINIAFIFAVMGAIGGTMTLPGIAGIVLTIGTSVDANVLIYERMREEIRSGKSPVRAIELGFDKAMSAIIDANVTSFLSSAILFVLGAGPVRGFAVTTMIGIAASIFTAIWVVRLMIVIWYGWRRPKTIVI.

The next 6 helical transmembrane spans lie at 10 to 30 (LVILGLCLAALITAAPNMFYA), 392 to 412 (AGMVASVIGFVAVVAYMIASY), 414 to 434 (LFGFFSSVALFINIAFIFAVM), 435 to 455 (GAIGGTMTLPGIAGIVLTIGT), 491 to 511 (AIIDANVTSFLSSAILFVLGA), and 516 to 536 (GFAVTTMIGIAASIFTAIWVV).

This sequence belongs to the SecD/SecF family. SecD subfamily. As to quaternary structure, forms a complex with SecF. Part of the essential Sec protein translocation apparatus which comprises SecA, SecYEG and auxiliary proteins SecDF-YajC and YidC.

It is found in the cell inner membrane. Functionally, part of the Sec protein translocase complex. Interacts with the SecYEG preprotein conducting channel. SecDF uses the proton motive force (PMF) to complete protein translocation after the ATP-dependent function of SecA. The protein is Protein translocase subunit SecD of Rhodobacter capsulatus (strain ATCC BAA-309 / NBRC 16581 / SB1003).